The chain runs to 376 residues: Glutamate 5-kinase (376 aa).

Position 17 (K17) interacts with ATP. The substrate site is built by S56, D144, and N156. ATP contacts are provided by residues 176–177 and 218–224; these read TD and TGGMQSK. The PUA domain maps to 283 to 359; sequence KGTLLLDAGA…QSREIASVLK (77 aa).

Belongs to the glutamate 5-kinase family.

It is found in the cytoplasm. The catalysed reaction is L-glutamate + ATP = L-glutamyl 5-phosphate + ADP. The protein operates within amino-acid biosynthesis; L-proline biosynthesis; L-glutamate 5-semialdehyde from L-glutamate: step 1/2. Functionally, catalyzes the transfer of a phosphate group to glutamate to form L-glutamate 5-phosphate. The protein is Glutamate 5-kinase of Desulfotalea psychrophila (strain LSv54 / DSM 12343).